The chain runs to 183 residues: ATP synthase subunit delta (183 aa).

It belongs to the ATPase delta chain family. F-type ATPases have 2 components, F(1) - the catalytic core - and F(0) - the membrane proton channel. F(1) has five subunits: alpha(3), beta(3), gamma(1), delta(1), epsilon(1). F(0) has three main subunits: a(1), b(2) and c(10-14). The alpha and beta chains form an alternating ring which encloses part of the gamma chain. F(1) is attached to F(0) by a central stalk formed by the gamma and epsilon chains, while a peripheral stalk is formed by the delta and b chains.

The protein localises to the cell inner membrane. Its function is as follows. F(1)F(0) ATP synthase produces ATP from ADP in the presence of a proton or sodium gradient. F-type ATPases consist of two structural domains, F(1) containing the extramembraneous catalytic core and F(0) containing the membrane proton channel, linked together by a central stalk and a peripheral stalk. During catalysis, ATP synthesis in the catalytic domain of F(1) is coupled via a rotary mechanism of the central stalk subunits to proton translocation. Functionally, this protein is part of the stalk that links CF(0) to CF(1). It either transmits conformational changes from CF(0) to CF(1) or is implicated in proton conduction. The protein is ATP synthase subunit delta of Thermotoga maritima (strain ATCC 43589 / DSM 3109 / JCM 10099 / NBRC 100826 / MSB8).